Consider the following 173-residue polypeptide: Coordinator of PRMT5 and differentiation stimulator (173 aa).

N-acetylmethionine is present on methionine 1. A disordered region spans residues 1-70; sequence MDPQAATGRG…EGPSSEEEGF (70 aa). Residues serine 64 and serine 65 each carry the phosphoserine modification.

Interacts with PRMT5. Interacts with histone H4; specifically interacts with the N-terminus of histone H4 but not with histone H3. Interacts with CBFB. Found in a complex with PRMT5, RUNX1 and CBFB.

The protein resides in the nucleus. Functionally, histone-binding protein required for histone H4 methyltransferase activity of PRMT5. Specifically required for histone H4 'Arg-3' methylation mediated by PRMT5, but not histone H3 'Arg-8' methylation, suggesting that it modulates the substrate specificity of PRMT5. Specifically interacts with the N-terminus of histone H4 but not with histone H3, suggesting that it acts by promoting the association between histone H4 and PRMT5. Involved in CCNE1 promoter repression. Plays a role in muscle cell differentiation by modulating the recruitment of PRMT5 to the promoter of genes involved in the coordination between cell cycle exit and muscle differentiation. In Mus musculus (Mouse), this protein is Coordinator of PRMT5 and differentiation stimulator (Coprs).